The sequence spans 933 residues: Protein translocase subunit SecA (933 aa).

ATP-binding positions include Gln-87, 105-109, and Asp-515; that span reads GEGKT. 3 disordered regions span residues 567–588, 840–861, and 880–933; these read ESRR…PGSS, DVEA…RHAA, and AAAE…CGKL. The segment covering 845 to 856 has biased composition (basic and acidic residues); sequence EEQRRQEAERMQ. Low complexity predominate over residues 880-897; the sequence is AAAEGDSAPTGGAQQQSA. Basic and acidic residues predominate over residues 905–914; sequence VAREGPKVGR. Residues Cys-918, Cys-920, Cys-929, and Cys-930 each contribute to the Zn(2+) site. The segment covering 924–933 has biased composition (basic residues); the sequence is KKYKHCCGKL.

It belongs to the SecA family. Monomer and homodimer. Part of the essential Sec protein translocation apparatus which comprises SecA, SecYEG and auxiliary proteins SecDF-YajC and YidC. The cofactor is Zn(2+).

It is found in the cell inner membrane. The protein localises to the cytoplasm. It carries out the reaction ATP + H2O + cellular proteinSide 1 = ADP + phosphate + cellular proteinSide 2.. Functionally, part of the Sec protein translocase complex. Interacts with the SecYEG preprotein conducting channel. Has a central role in coupling the hydrolysis of ATP to the transfer of proteins into and across the cell membrane, serving both as a receptor for the preprotein-SecB complex and as an ATP-driven molecular motor driving the stepwise translocation of polypeptide chains across the membrane. The chain is Protein translocase subunit SecA from Halorhodospira halophila (strain DSM 244 / SL1) (Ectothiorhodospira halophila (strain DSM 244 / SL1)).